The primary structure comprises 139 residues: Large-conductance mechanosensitive channel (139 aa).

2 helical membrane passes run 9-29 (AFAV…GAAF) and 79-99 (IQTV…VKAI).

Belongs to the MscL family. As to quaternary structure, homopentamer.

The protein localises to the cell inner membrane. Its function is as follows. Channel that opens in response to stretch forces in the membrane lipid bilayer. May participate in the regulation of osmotic pressure changes within the cell. This Pseudomonas putida (strain W619) protein is Large-conductance mechanosensitive channel.